The following is a 929-amino-acid chain: Chitin synthase 1 (929 aa).

Residues 1–12 (MAYRGAGGPGGG) are compositionally biased toward gly residues. 2 disordered regions span residues 1 to 43 (MAYR…QEDE) and 114 to 156 (MGGH…GGGL). Polar residues-rich tracts occupy residues 21-33 (QDLN…SNVQ) and 140-149 (SWVQRQNPNA). Residue Asn-560 is glycosylated (N-linked (GlcNAc...) asparagine). Helical transmembrane passes span 587-607 (FFFH…WFSL), 643-663 (LFNA…FILA), 678-698 (SFFV…YLVV), 730-750 (VILL…FMYL), and 758-778 (SFPY…VYAF). The N-linked (GlcNAc...) asparagine glycan is linked to Asn-801. The next 2 helical transmembrane spans lie at 857–877 (TMLV…ITSD) and 897–917 (FLLF…LWFL).

The protein belongs to the chitin synthase family. Class III subfamily.

It localises to the cell membrane. It carries out the reaction [(1-&gt;4)-N-acetyl-beta-D-glucosaminyl](n) + UDP-N-acetyl-alpha-D-glucosamine = [(1-&gt;4)-N-acetyl-beta-D-glucosaminyl](n+1) + UDP + H(+). Functionally, polymerizes chitin, a structural polymer of the cell wall and septum, by transferring the sugar moiety of UDP-GlcNAc to the non-reducing end of the growing chitin polymer. CHS1 and CHS3 have compensatory functions in cell wall modifications in responses to stresses. Involved in appressoria formation and required for full virulence. This chain is Chitin synthase 1, found in Pyricularia oryzae (strain 70-15 / ATCC MYA-4617 / FGSC 8958) (Rice blast fungus).